A 280-amino-acid polypeptide reads, in one-letter code: Probable inactive shikimate kinase like 1, chloroplastic (280 aa).

Residues 1–54 constitute a chloroplast transit peptide; that stretch reads MEIFSASASLTLTGFVPRLLPLLSPQARTTLCKPLLSSSSTRLISCHSRIAPSR.

The protein belongs to the shikimate kinase family.

The protein resides in the plastid. It localises to the chloroplast. In terms of biological role, required for chloroplast biogenesis. The sequence is that of Probable inactive shikimate kinase like 1, chloroplastic (SKL1) from Arabidopsis thaliana (Mouse-ear cress).